The sequence spans 474 residues: Gamma-aminobutyric acid receptor subunit beta-1 (474 aa).

Residues 1-25 (MWTVQNRESLGLLSFPVMVAMVCCA) form the signal peptide. At 26-245 (HSSNEPSNMS…SFRLKRNIGY (220 aa)) the chain is on the extracellular side. N33 and N105 each carry an N-linked (GlcNAc...) asparagine glycan. Y122 serves as a coordination point for histamine. C161 and C175 are oxidised to a cystine. The N-linked (GlcNAc...) asparagine glycan is linked to N174. Histamine is bound by residues 181–182 (SY) and T227. 2 residues coordinate 4-aminobutanoate: Y182 and T227. 3 helical membrane-spanning segments follow: residues 246–267 (FILQ…SFWI), 271–293 (ASAA…STHL), and 305–327 (AIDI…YAFV). Residues 328 to 451 (NYIFFGKGPQ…DLTDVNSIDK (124 aa)) are Cytoplasmic-facing. The helical transmembrane segment at 452–473 (WSRMFFPITFSLFNVVYWLYYV) threads the bilayer.

It belongs to the ligand-gated ion channel (TC 1.A.9) family. Gamma-aminobutyric acid receptor (TC 1.A.9.5) subfamily. GABRB1 sub-subfamily. Heteropentamer, formed by a combination of alpha (GABRA1-6), beta (GABRB1-3), gamma (GABRG1-3), delta (GABRD), epsilon (GABRE), rho (GABRR1-3), pi (GABRP) and theta (GABRQ) chains, each subunit exhibiting distinct physiological and pharmacological properties. Binds UBQLN1.

The protein localises to the postsynaptic cell membrane. Its subcellular location is the cell membrane. It catalyses the reaction chloride(in) = chloride(out). Its activity is regulated as follows. Potentiated by histamine. Beta subunit of the heteropentameric ligand-gated chloride channel gated by gamma-aminobutyric acid (GABA), a major inhibitory neurotransmitter in the brain. GABA-gated chloride channels, also named GABA(A) receptors (GABAAR), consist of five subunits arranged around a central pore and contain GABA active binding site(s) located at the alpha and beta subunit interface(s). When activated by GABA, GABAARs selectively allow the flow of chloride anions across the cell membrane down their electrochemical gradient. Chloride influx into the postsynaptic neuron following GABAAR opening decreases the neuron ability to generate a new action potential, thereby reducing nerve transmission. Beta-containing GABAARs can simultaneously bind GABA and histamine where histamine binds at the interface of two neighboring beta subunits, which may be involved in the regulation of sleep and wakefulness. The polypeptide is Gamma-aminobutyric acid receptor subunit beta-1 (Mus musculus (Mouse)).